The primary structure comprises 292 residues: Putative rRNA 2'-O-methyltransferase fibrillarin 3 (292 aa).

Positions 1–58 are disordered; the sequence is MKPPQRGRGGGVRGGRGLARGGEGSAVRGSGRGGESGRGRGPGRVKSESDGGIKGGSK. Over residues 7–42 the composition is skewed to gly residues; the sequence is GRGGGVRGGRGLARGGEGSAVRGSGRGGESGRGRGP. Residues 146 to 147, 165 to 166, 190 to 191, and 210 to 213 contribute to the S-adenosyl-L-methionine site; these read YT, EH, DA, and DVNH.

This sequence belongs to the methyltransferase superfamily. Fibrillarin family. Component of box C/D small nucleolar ribonucleoprotein (snoRNP) particles. As to expression, not detectable by RT-PCR.

The protein resides in the nucleus. The protein localises to the nucleolus. It catalyses the reaction L-glutaminyl-[histone H2A] + S-adenosyl-L-methionine = N(5)-methyl-L-glutaminyl-[histone H2A] + S-adenosyl-L-homocysteine + H(+). Functionally, S-adenosyl-L-methionine-dependent methyltransferase that has the ability to methylate both RNAs and proteins. Involved in pre-rRNA processing. Utilizes the methyl donor S-adenosyl-L-methionine to catalyze the site-specific 2'-hydroxyl methylation of ribose moieties in pre-ribosomal RNA. Site specificity is provided by a guide RNA that base pairs with the substrate. Methylation occurs at a characteristic distance from the sequence involved in base pairing with the guide RNA. Also acts as a protein methyltransferase by mediating methylation of 'Gln-105' of histone H2A (H2AQ105me), a modification that impairs binding of the FACT complex and is specifically present at 35S ribosomal DNA locus. This is Putative rRNA 2'-O-methyltransferase fibrillarin 3 (FIB3) from Arabidopsis thaliana (Mouse-ear cress).